A 260-amino-acid polypeptide reads, in one-letter code: Triosephosphate isomerase (260 aa).

11 to 13 (NWK) lines the substrate pocket. Residue histidine 103 is the Electrophile of the active site. Glutamate 175 serves as the catalytic Proton acceptor. Substrate-binding positions include glycine 181, serine 220, and 241-242 (GG).

Belongs to the triosephosphate isomerase family. In terms of assembly, homodimer.

It is found in the cytoplasm. It carries out the reaction D-glyceraldehyde 3-phosphate = dihydroxyacetone phosphate. Its pathway is carbohydrate biosynthesis; gluconeogenesis. The protein operates within carbohydrate degradation; glycolysis; D-glyceraldehyde 3-phosphate from glycerone phosphate: step 1/1. Functionally, involved in the gluconeogenesis. Catalyzes stereospecifically the conversion of dihydroxyacetone phosphate (DHAP) to D-glyceraldehyde-3-phosphate (G3P). The chain is Triosephosphate isomerase from Shewanella sediminis (strain HAW-EB3).